The primary structure comprises 167 residues: Transcriptional regulator MraZ (167 aa).

2 consecutive SpoVT-AbrB domains span residues 8–51 and 92–135; these read ESNH…YGDH and SFPT…NPAT.

It belongs to the MraZ family. Forms oligomers.

The protein resides in the cytoplasm. It localises to the nucleoid. The protein is Transcriptional regulator MraZ of Ruegeria pomeroyi (strain ATCC 700808 / DSM 15171 / DSS-3) (Silicibacter pomeroyi).